Consider the following 1438-residue polypeptide: DNA polymerase III PolC-type (1438 aa).

The Exonuclease domain maps to 422–578; sequence YVVFDVETTG…YDTEATAYIF (157 aa).

The protein belongs to the DNA polymerase type-C family. PolC subfamily.

The protein localises to the cytoplasm. It catalyses the reaction DNA(n) + a 2'-deoxyribonucleoside 5'-triphosphate = DNA(n+1) + diphosphate. Required for replicative DNA synthesis. This DNA polymerase also exhibits 3' to 5' exonuclease activity. This chain is DNA polymerase III PolC-type, found in Staphylococcus aureus (strain MSSA476).